The chain runs to 151 residues: 3-dehydroquinate dehydratase (151 aa).

Tyrosine 26 serves as the catalytic Proton acceptor. Substrate is bound by residues asparagine 77, histidine 83, and aspartate 90. The active-site Proton donor is histidine 103. Substrate-binding positions include 104–105 and arginine 114; that span reads LS.

Belongs to the type-II 3-dehydroquinase family. In terms of assembly, homododecamer.

It carries out the reaction 3-dehydroquinate = 3-dehydroshikimate + H2O. Its pathway is metabolic intermediate biosynthesis; chorismate biosynthesis; chorismate from D-erythrose 4-phosphate and phosphoenolpyruvate: step 3/7. In terms of biological role, catalyzes a trans-dehydration via an enolate intermediate. The polypeptide is 3-dehydroquinate dehydratase (Pelodictyon phaeoclathratiforme (strain DSM 5477 / BU-1)).